We begin with the raw amino-acid sequence, 191 residues long: Ribosome maturation factor RimM (191 aa).

In terms of domain architecture, PRC barrel spans 99 to 172 (TDEFYQIDLI…FLVVDPVAAG (74 aa)).

The protein belongs to the RimM family. In terms of assembly, binds ribosomal protein uS19.

It localises to the cytoplasm. An accessory protein needed during the final step in the assembly of 30S ribosomal subunit, possibly for assembly of the head region. Essential for efficient processing of 16S rRNA. May be needed both before and after RbfA during the maturation of 16S rRNA. It has affinity for free ribosomal 30S subunits but not for 70S ribosomes. The chain is Ribosome maturation factor RimM from Bartonella bacilliformis (strain ATCC 35685 / KC583 / Herrer 020/F12,63).